Consider the following 1563-residue polypeptide: Pentafunctional AROM polypeptide (1563 aa).

The interval 1–382 is 3-dehydroquinate synthase; the sequence is MAESSSNPTR…YEPKASVVED (382 aa). Residues 48 to 50, 82 to 85, 113 to 115, and Asp118 each bind NAD(+); these read DTN, EYSK, and GGV. Arg129 lines the 7-phospho-2-dehydro-3-deoxy-D-arabino-heptonate pocket. 138-139 contacts NAD(+); that stretch reads TT. Positions 145 and 151 each coordinate 7-phospho-2-dehydro-3-deoxy-D-arabino-heptonate. Lys160 lines the NAD(+) pocket. Asn161 provides a ligand contact to 7-phospho-2-dehydro-3-deoxy-D-arabino-heptonate. NAD(+)-binding positions include 178–181 and Asn189; that span reads FLNT. Glu193 is a Zn(2+) binding site. 7-phospho-2-dehydro-3-deoxy-D-arabino-heptonate is bound by residues 193-196 and Lys248; that span reads EVIK. Glu258 (proton acceptor; for 3-dehydroquinate synthase activity) is an active-site residue. 7-phospho-2-dehydro-3-deoxy-D-arabino-heptonate-binding positions include 262-266 and His269; that span reads RNLLN. His269 contributes to the Zn(2+) binding site. The active-site Proton acceptor; for 3-dehydroquinate synthase activity is the His273. The 7-phospho-2-dehydro-3-deoxy-D-arabino-heptonate site is built by His285 and Lys354. His285 contributes to the Zn(2+) binding site. The interval 395-834 is EPSP synthase; that stretch reads VHAGVPKDLK…WDTMSNYFKS (440 aa). Cys816 (for EPSP synthase activity) is an active-site residue. Residues 836–850 are compositionally biased toward basic and acidic residues; that stretch reads LEGEEEPHSSHVSHE. The disordered stretch occupies residues 836-857; that stretch reads LEGEEEPHSSHVSHEKPRKGNP. The tract at residues 857 to 1051 is shikimate kinase; the sequence is PKSIFIIGMR…KKKPQSSFVS (195 aa). 864 to 871 contributes to the ATP binding site; sequence GMRGAGKS. The segment at 1052-1265 is 3-dehydroquinase; the sequence is LTVPNVSKAL…AAPGQLSAAE (214 aa). His1168 acts as the Proton acceptor; for 3-dehydroquinate dehydratase activity in catalysis. Lys1196 acts as the Schiff-base intermediate with substrate; for 3-dehydroquinate dehydratase activity in catalysis. Residues 1278 to 1563 form a shikimate dehydrogenase region; it reads PRSFYLFGKP…TDAQAAVMGN (286 aa).

In the N-terminal section; belongs to the sugar phosphate cyclases superfamily. Dehydroquinate synthase family. It in the 2nd section; belongs to the EPSP synthase family. The protein in the 3rd section; belongs to the shikimate kinase family. This sequence in the 4th section; belongs to the type-I 3-dehydroquinase family. In the C-terminal section; belongs to the shikimate dehydrogenase family. Homodimer. It depends on Zn(2+) as a cofactor.

The protein localises to the cytoplasm. It carries out the reaction 7-phospho-2-dehydro-3-deoxy-D-arabino-heptonate = 3-dehydroquinate + phosphate. The catalysed reaction is 3-dehydroquinate = 3-dehydroshikimate + H2O. It catalyses the reaction shikimate + NADP(+) = 3-dehydroshikimate + NADPH + H(+). The enzyme catalyses shikimate + ATP = 3-phosphoshikimate + ADP + H(+). It carries out the reaction 3-phosphoshikimate + phosphoenolpyruvate = 5-O-(1-carboxyvinyl)-3-phosphoshikimate + phosphate. The protein operates within metabolic intermediate biosynthesis; chorismate biosynthesis; chorismate from D-erythrose 4-phosphate and phosphoenolpyruvate: step 2/7. It participates in metabolic intermediate biosynthesis; chorismate biosynthesis; chorismate from D-erythrose 4-phosphate and phosphoenolpyruvate: step 3/7. It functions in the pathway metabolic intermediate biosynthesis; chorismate biosynthesis; chorismate from D-erythrose 4-phosphate and phosphoenolpyruvate: step 4/7. Its pathway is metabolic intermediate biosynthesis; chorismate biosynthesis; chorismate from D-erythrose 4-phosphate and phosphoenolpyruvate: step 5/7. The protein operates within metabolic intermediate biosynthesis; chorismate biosynthesis; chorismate from D-erythrose 4-phosphate and phosphoenolpyruvate: step 6/7. Functionally, the AROM polypeptide catalyzes 5 consecutive enzymatic reactions in prechorismate polyaromatic amino acid biosynthesis. The chain is Pentafunctional AROM polypeptide from Sordaria macrospora (strain ATCC MYA-333 / DSM 997 / K(L3346) / K-hell).